A 328-amino-acid polypeptide reads, in one-letter code: Probable cell division protein WhiA (328 aa).

Positions 273-306 (SLEELGALADPPLTKDAVAGRIRRLLAMADKRAS) form a DNA-binding region, H-T-H motif.

It belongs to the WhiA family. In terms of assembly, monomer in solution.

Involved in cell division and chromosome segregation. Involved in sporulation. May coordinate the cessation of aerial hyphae growth and subsequent chromosome segregation and/or septation. Required for expression of the ParB partioning protein during sporogenesis. Activates its own transcription and represses WhiB. Binds with low affinity to its own promoter and to the Parp2 sporulation-specific promoter. Also binds directly to the RNA polymerase sigma factor WhiG, leading to inhibition of WhiG-dependent transcription in a dose-dependent manner. In Streptomyces coelicolor (strain ATCC BAA-471 / A3(2) / M145), this protein is Probable cell division protein WhiA.